A 316-amino-acid chain; its full sequence is Glutathione synthetase (316 aa).

The 187-residue stretch at 125–311 folds into the ATP-grasp domain; the sequence is KLFTAWFPEL…ITGMLMNAIE (187 aa). 151-207 provides a ligand contact to ATP; that stretch reads HQKHGDVIFKPLDGMGGASIFRLKKDDPNVGVIIETLTEHGNRFCMAQNFLPAIKEG. Positions 281 and 283 each coordinate Mg(2+).

This sequence belongs to the prokaryotic GSH synthase family. It depends on Mg(2+) as a cofactor. The cofactor is Mn(2+).

The enzyme catalyses gamma-L-glutamyl-L-cysteine + glycine + ATP = glutathione + ADP + phosphate + H(+). The protein operates within sulfur metabolism; glutathione biosynthesis; glutathione from L-cysteine and L-glutamate: step 2/2. This chain is Glutathione synthetase, found in Photorhabdus laumondii subsp. laumondii (strain DSM 15139 / CIP 105565 / TT01) (Photorhabdus luminescens subsp. laumondii).